A 358-amino-acid polypeptide reads, in one-letter code: Protein FAM187B (358 aa).

The signal sequence occupies residues 1–17 (MLATLWLVGLSLPMLWA). Residues 18–322 (QRLISCPYKN…DKADSVLRRL (305 aa)) lie on the Extracellular side of the membrane. N-linked (GlcNAc...) asparagine glycosylation occurs at asparagine 127. Residues 323-343 (KLMVLSISVLAVGGLLCKVVF) form a helical membrane-spanning segment. At 344 to 358 (RPVCGKKRSQVLLVK) the chain is on the cytoplasmic side.

This sequence belongs to the FAM187 family.

The protein resides in the membrane. The sequence is that of Protein FAM187B (Fam187b) from Mus musculus (Mouse).